We begin with the raw amino-acid sequence, 260 residues long: MMLIRVLANLLILQLSYAQKSSELVIGGDECNINEHRFLVALYDVWSGDFLCGGTLINKEYVLTAAHCETRNMYIYLGMHNKMYQFDDEQRRYPKKKYFFRCSNNFTRWDKDIMLIRLNRPVRNSEHIAPLSLPSSPPSVGSVCRVMGWGTITSPNETLPDVPRCANINLLNYTVCRGVFPRLPARSRTLCAGVLQGGIDTCKRDSGGPLICNGKLQGVVFWGPKPCAQPRKPALYTKVFDHLDWIQSIIAGNTTVTCPP.

The N-terminal stretch at 1 to 18 (MMLIRVLANLLILQLSYA) is a signal peptide. The propeptide occupies 19–24 (QKSSEL). Positions 25–251 (VIGGDECNIN…HLDWIQSIIA (227 aa)) constitute a Peptidase S1 domain. 6 disulfides stabilise this stretch: Cys-31–Cys-165, Cys-52–Cys-68, Cys-102–Cys-258, Cys-144–Cys-212, Cys-176–Cys-191, and Cys-202–Cys-227. Residue His-67 is the Charge relay system of the active site. A glycan (N-linked (GlcNAc...) asparagine) is linked at Asn-105. The active-site Charge relay system is the Asp-112. N-linked (GlcNAc...) asparagine glycans are attached at residues Asn-156 and Asn-172. Catalysis depends on Ser-206, which acts as the Charge relay system. N-linked (GlcNAc...) asparagine glycosylation occurs at Asn-253.

The protein belongs to the peptidase S1 family. Snake venom subfamily. Monomer. Expressed by the venom gland.

The protein localises to the secreted. Its function is as follows. Thrombin-like snake venom serine protease. This Trimeresurus albolabris (White-lipped pit viper) protein is Thrombin-like enzyme 2.